Here is a 62-residue protein sequence, read N- to C-terminus: DNA-directed RNA polymerase subunit Rpo10 (62 aa).

Zn(2+) contacts are provided by Cys-6, Cys-9, Cys-43, and Cys-44.

Belongs to the archaeal Rpo10/eukaryotic RPB10 RNA polymerase subunit family. As to quaternary structure, part of the RNA polymerase complex. The cofactor is Zn(2+).

Its subcellular location is the cytoplasm. It carries out the reaction RNA(n) + a ribonucleoside 5'-triphosphate = RNA(n+1) + diphosphate. DNA-dependent RNA polymerase (RNAP) catalyzes the transcription of DNA into RNA using the four ribonucleoside triphosphates as substrates. The protein is DNA-directed RNA polymerase subunit Rpo10 of Methanocorpusculum labreanum (strain ATCC 43576 / DSM 4855 / Z).